A 376-amino-acid polypeptide reads, in one-letter code: Erythronate-4-phosphate dehydrogenase (376 aa).

Residues Ser-45 and Thr-67 each contribute to the substrate site. Asp-147 is an NAD(+) binding site. Residue Arg-209 is part of the active site. Asp-233 serves as a coordination point for NAD(+). Glu-238 is a catalytic residue. The Proton donor role is filled by His-255. Gly-258 contacts NAD(+). Residue Tyr-259 participates in substrate binding.

This sequence belongs to the D-isomer specific 2-hydroxyacid dehydrogenase family. PdxB subfamily. Homodimer.

It is found in the cytoplasm. It carries out the reaction 4-phospho-D-erythronate + NAD(+) = (R)-3-hydroxy-2-oxo-4-phosphooxybutanoate + NADH + H(+). The protein operates within cofactor biosynthesis; pyridoxine 5'-phosphate biosynthesis; pyridoxine 5'-phosphate from D-erythrose 4-phosphate: step 2/5. Catalyzes the oxidation of erythronate-4-phosphate to 3-hydroxy-2-oxo-4-phosphonooxybutanoate. This Shewanella halifaxensis (strain HAW-EB4) protein is Erythronate-4-phosphate dehydrogenase.